The primary structure comprises 415 residues: N-succinylarginine dihydrolase (415 aa).

Substrate contacts are provided by residues 18–27 (AGLSRGNIAS), asparagine 100, and 127–128 (HR). The active site involves glutamate 161. Arginine 193 provides a ligand contact to substrate. Residue histidine 229 is part of the active site. Positions 231 and 340 each coordinate substrate. Catalysis depends on cysteine 346, which acts as the Nucleophile.

The protein belongs to the succinylarginine dihydrolase family. In terms of assembly, homodimer.

It carries out the reaction N(2)-succinyl-L-arginine + 2 H2O + 2 H(+) = N(2)-succinyl-L-ornithine + 2 NH4(+) + CO2. Its pathway is amino-acid degradation; L-arginine degradation via AST pathway; L-glutamate and succinate from L-arginine: step 2/5. Functionally, catalyzes the hydrolysis of N(2)-succinylarginine into N(2)-succinylornithine, ammonia and CO(2). This chain is N-succinylarginine dihydrolase, found in Sphingopyxis alaskensis (strain DSM 13593 / LMG 18877 / RB2256) (Sphingomonas alaskensis).